The primary structure comprises 280 residues: Probable aquaporin PIP2-8 (280 aa).

A disordered region spans residues 1–21 (MAAGSGSGSNPKDYQDPPPAP). A run of 2 helical transmembrane segments spans residues 36-56 (AAIAEFTATLLLVCISVSTVI) and 70-92 (LGIAWAFGGLIFVLVYCTAGISG). The NPA 1 motif lies at 96 to 98 (NPA). The next 3 helical transmembrane spans lie at 113–135 (RAALYTMAQCVGAVCGAGLARAM), 156–176 (SAGAGVVAEMVGTFVLVYTVF), and 192–212 (VLAPLPIGLAVLVVHLATIPI). Positions 218–220 (NPA) match the NPA 2 motif. A helical membrane pass occupies residues 236–256 (AWSHLWIFWVGPFAGAAAAMI).

It belongs to the MIP/aquaporin (TC 1.A.8) family. PIP (TC 1.A.8.11) subfamily. In terms of tissue distribution, expressed in leaves and at lower levels in roots.

The protein resides in the cell membrane. In terms of biological role, aquaporins facilitate the transport of water and small neutral solutes across cell membranes. In Oryza sativa subsp. japonica (Rice), this protein is Probable aquaporin PIP2-8 (PIP2-8).